The sequence spans 502 residues: Ubiquitin-associated protein 1 (502 aa).

Positions Met1–Gly95 are interaction with ESCRT-I. The UMA domain occupies Leu17–Ile63. Residues Ala86–Ser100 show a composition bias toward basic and acidic residues. The disordered stretch occupies residues Ala86–Ile117. Polar residues predominate over residues Met102–Thr112. Phosphoserine occurs at positions 146, 205, and 289. The segment at Val260–Thr290 is interaction with PTPN23. 2 UBA domains span residues Ser389–His430 and Gln451–Arg498.

Component of an ESCRT-I complex (endosomal sorting complex required for transport I) which consists of TSG101, VPS28, VPS37A and UBAP1 in a 1:1:1:1 stoichiometry. Interacts with PTPN23. Interacts (via UBA domains) with ubiquitinated proteins. Ubiquitous. Highly expressed in heart, brain, placenta, lung, liver, skeletal muscle and pancreas.

It localises to the cytoplasm. The protein resides in the cytosol. The protein localises to the endosome. Its function is as follows. Component of the ESCRT-I complex, a regulator of vesicular trafficking process. Binds to ubiquitinated cargo proteins and is required for the sorting of endocytic ubiquitinated cargos into multivesicular bodies (MVBs). Plays a role in the proteasomal degradation of ubiquitinated cell-surface proteins, such as EGFR and BST2. The chain is Ubiquitin-associated protein 1 from Homo sapiens (Human).